Here is a 181-residue protein sequence, read N- to C-terminus: Nucleoside-triphosphatase THEP1 (181 aa).

ATP contacts are provided by residues 12-19 (GPVGSIKS) and 104-111 (VIVIDEIG).

It belongs to the THEP1 NTPase family.

It carries out the reaction a ribonucleoside 5'-triphosphate + H2O = a ribonucleoside 5'-diphosphate + phosphate + H(+). Functionally, has nucleotide phosphatase activity towards ATP, GTP, CTP, TTP and UTP. May hydrolyze nucleoside diphosphates with lower efficiency. This Thermoplasma acidophilum (strain ATCC 25905 / DSM 1728 / JCM 9062 / NBRC 15155 / AMRC-C165) protein is Nucleoside-triphosphatase THEP1.